Consider the following 972-residue polypeptide: Nuclear factor NF-kappa-B p105 subunit (972 aa).

The RHD domain maps to 39 to 246 (ADGPYLQILE…DAIYDSKAPN (208 aa)). Cys61 is modified (S-nitrosocysteine; alternate). Cys61 carries the S-(15-deoxy-Delta12,14-prostaglandin J2-9-yl)cysteine; alternate lipid modification. Residue Lys325 forms a Glycyl lysine isopeptide (Lys-Gly) (interchain with G-Cter in SUMO2) linkage. Ser337 bears the Phosphoserine; by PKA mark. The short motif at 360 to 365 (QRKRQK) is the Nuclear localization signal element. The GRR stretch occupies residues 372–394 (DSFGGGSGAGAGGGGMFGSGGGG). The disordered stretch occupies residues 425–473 (KSNAGMKHGTIDTPSKNDSEGCGKNVDREAVNLSGKVTEPTEQDKESSM). N6-acetyllysine; by EP300 occurs at positions 431 and 440. An interaction with CFLAR region spans residues 435–972 (IDTPSKNDSE…GQEGPIEGKI (538 aa)). Basic and acidic residues predominate over residues 439–454 (SKNDSEGCGKNVDREA). ANK repeat units lie at residues 539-568 (NGDSVLHLAIIHLHAQLVRDLLEVTSGLIS), 578-607 (LYQTPLHLAVITKQEAVVDDLLRAGADLSL), 611-640 (LGNSVLHLAAKEGQDKILSILLKHKKAALL), 647-676 (EGLNAIHIAVMSNSMPCLLLLVAAGADVNA), 681-711 (SGRTALHLAVEHDNISLAGCLLLEGDAHVDS), and 715-744 (DGTTPLHIAAGRGSTRLAALLKAAGADPLV). The interval 647–681 (EGLNAIHIAVMSNSMPCLLLLVAAGADVNAQERKS) is essential for interaction with HIF1AN. Asn675 is modified ((3S)-3-hydroxyasparagine; by HIF1AN). Ser756 carries the post-translational modification Phosphoserine. The ANK 7 repeat unit spans residues 768–798 (PGTTPLDMATNWQVFDILNGKPYEPEFTSDD). In terms of domain architecture, Death spans 814-889 (LQLYKLLEIP…EAIEVIQAAF (76 aa)). Positions 894 to 926 (TAAPSPGKGAPQTLSLPLSSASTRSPVDEVRDD) are disordered. Residues 905–918 (QTLSLPLSSASTRS) are compositionally biased toward polar residues. Phosphoserine; by GSK3-beta; in vitro is present on residues Ser908 and Ser912. Ser927 carries the phosphoserine modification. A phosphoserine; by IKKB mark is found at Ser931 and Ser936. Residue Ser941 is modified to Phosphoserine. Position 947 is a phosphothreonine (Thr947).

As to quaternary structure, component of the NF-kappa-B p65-p50 complex. Homodimer; component of the NF-kappa-B p50-p50 complex. Component of the NF-kappa-B p105-p50 complex. Component of the NF-kappa-B p50-c-Rel complex. Component of a complex consisting of the NF-kappa-B p50-p50 homodimer and BCL3. Also interacts with MAP3K8. NF-kappa-B p50 subunit interacts with NCOA3 coactivator, which may coactivate NF-kappa-B dependent expression via its histone acetyltransferase activity. Interacts with TSC22D3; this interaction prevents nuclear translocation and DNA-binding. Interacts with SPAG9 and UNC5CL. NFKB1/p105 interacts with CFLAR; the interaction inhibits p105 processing into p50. NFKB1/p105 forms a ternary complex with MAP3K8 and TNIP2. Interacts with GSK3B; the interaction prevents processing of p105 to p50. NFKB1/p50 interacts with NFKBIE. NFKB1/p50 interacts with NFKBIZ. Nuclear factor NF-kappa-B p50 subunit interacts with NFKBID. Directly interacts with MEN1. Interacts with HIF1AN. Interacts with FEM1A; interaction is direct. Post-translationally, generation of the NF-kappa-B p50 (Nuclear factor NF-kappa-B p50 subunit) transcription factor takes place both cotranslationally and post-translationally via non-mutually exclusive mechanisms. A cotranslational processing allows the production of both p50 and p105 (Nuclear factor NF-kappa-B p105 subunit) from a single NFKB1 mRNA. While translation occurs, the particular unfolded structure after the GRR repeat region acts as a substrate for the proteasome, promoting degradation of the C-terminus. The GRR acts as a proteasomal 'stop signal', protecting the region upstream of the GRR from degradation and promoting generation of p50. It is unclear if limited proteasome degradation during cotranslational processing depends on ubiquitination. NF-kappa-B p50 is also generated post-translationally following ubiquitination by the KPC complex, leading to limited processing by the proteasome downstream of the GRR region, thereby generating p50. Phosphorylation at the C-terminus by IKBKB/IKKB acts as a signal for ubiquitination and promotes either complete degradation or processing to generate the NF-kappa-B p50 (Nuclear factor NF-kappa-B p50 subunit). Phosphorylation at Ser-908 and Ser-912 primes p105 for proteolytic processing in response to TNF-alpha stimulation. Phosphorylation at Ser-927, Ser-931 and Ser-936 are required for BTRC/BTRCP-mediated ubiquitination and proteolysis. Phosphorylation at Ser-931 is also required for ubiquitination by the KPC complex and limited processing to generate NF-kappa-B p50 (Nuclear factor NF-kappa-B p50 subunit). In terms of processing, polyubiquitinated at multiple Lys residues in the C-terminus. Polyubiquitinated by the SCF(FBXW11) and SCF(BTRC) complexes following phosphorylation at Ser-923, Ser-927, Ser-931 and Ser-936, leading to its complete degradation. In contrast, polyubiquitination by the KPC complex following phosphorylation at Ser-931 leads to limited proteosomal processing and generation of the active NF-kappa-B p50 (Nuclear factor NF-kappa-B p50 subunit). Post-translationally, S-nitrosylation of Cys-61 affects DNA binding. The covalent modification of cysteine by 15-deoxy-Delta12,14-prostaglandin-J2 is autocatalytic and reversible. It may occur as an alternative to other cysteine modifications, such as S-nitrosylation and S-palmitoylation.

The protein resides in the cytoplasm. Its subcellular location is the nucleus. Its function is as follows. NF-kappa-B is a pleiotropic transcription factor present in almost all cell types and is the endpoint of a series of signal transduction events that are initiated by a vast array of stimuli related to many biological processes such as inflammation, immunity, differentiation, cell growth, tumorigenesis and apoptosis. NF-kappa-B is a homo- or heterodimeric complex formed by the Rel-like domain-containing proteins RELA/p65, RELB, NFKB1/p105, NFKB1/p50, REL and NFKB2/p52 and the heterodimeric p65-p50 complex appears to be most abundant one. The dimers bind at kappa-B sites in the DNA of their target genes and the individual dimers have distinct preferences for different kappa-B sites that they can bind with distinguishable affinity and specificity. Different dimer combinations act as transcriptional activators or repressors, respectively. NF-kappa-B is controlled by various mechanisms of post-translational modification and subcellular compartmentalization as well as by interactions with other cofactors or corepressors. NF-kappa-B complexes are held in the cytoplasm in an inactive state complexed with members of the NF-kappa-B inhibitor (I-kappa-B) family. In a conventional activation pathway, I-kappa-B is phosphorylated by I-kappa-B kinases (IKKs) in response to different activators, subsequently degraded thus liberating the active NF-kappa-B complex which translocates to the nucleus. NF-kappa-B heterodimeric p65-p50 and RelB-p50 complexes are transcriptional activators. The NF-kappa-B p50-p50 homodimer is a transcriptional repressor, but can act as a transcriptional activator when associated with BCL3. NFKB1 appears to have dual functions such as cytoplasmic retention of attached NF-kappa-B proteins by p105 and generation of p50 by a cotranslational processing. The proteasome-mediated process ensures the production of both p50 and p105 and preserves their independent function, although processing of NFKB1/p105 also appears to occur post-translationally. p50 binds to the kappa-B consensus sequence 5'-GGRNNYYCC-3', located in the enhancer region of genes involved in immune response and acute phase reactions. In a complex with MAP3K8, NFKB1/p105 represses MAP3K8-induced MAPK signaling; active MAP3K8 is released by proteasome-dependent degradation of NFKB1/p105. P105 is the precursor of the active p50 subunit (Nuclear factor NF-kappa-B p50 subunit) of the nuclear factor NF-kappa-B. Acts as a cytoplasmic retention of attached NF-kappa-B proteins by p105. In terms of biological role, constitutes the active form, which associates with RELA/p65 to form the NF-kappa-B p65-p50 complex to form a transcription factor. Together with RELA/p65, binds to the kappa-B consensus sequence 5'-GGRNNYYCC-3', located in the enhancer region of genes involved in immune response and acute phase reactions. This Canis lupus familiaris (Dog) protein is Nuclear factor NF-kappa-B p105 subunit (NFKB1).